A 384-amino-acid chain; its full sequence is Anhydro-N-acetylmuramic acid kinase (384 aa).

Gly12–Asp19 provides a ligand contact to ATP.

The protein belongs to the anhydro-N-acetylmuramic acid kinase family.

It carries out the reaction 1,6-anhydro-N-acetyl-beta-muramate + ATP + H2O = N-acetyl-D-muramate 6-phosphate + ADP + H(+). It participates in amino-sugar metabolism; 1,6-anhydro-N-acetylmuramate degradation. Its pathway is cell wall biogenesis; peptidoglycan recycling. Catalyzes the specific phosphorylation of 1,6-anhydro-N-acetylmuramic acid (anhMurNAc) with the simultaneous cleavage of the 1,6-anhydro ring, generating MurNAc-6-P. Is required for the utilization of anhMurNAc either imported from the medium or derived from its own cell wall murein, and thus plays a role in cell wall recycling. The polypeptide is Anhydro-N-acetylmuramic acid kinase (Cronobacter sakazakii (strain ATCC BAA-894) (Enterobacter sakazakii)).